Here is a 547-residue protein sequence, read N- to C-terminus: uncharacterized protein (547 aa).

The span at 1 to 18 (MEYHPSSQSPQVNPGMES) shows a compositional bias: polar residues. Disordered stretches follow at residues 1-41 (MEYH…LQHP) and 80-165 (PSYP…VKRQ). Low complexity-rich tracts occupy residues 19-29 (QQGGYTYTYQQ) and 83-94 (PQSSSAPSNNSY). Positions 121–135 (VPSPSPIEMVPPSPP) are enriched in pro residues. Polar residues predominate over residues 136–160 (KTGSNNSAPVTGKTVQSGNALNNSG). Positions 174–201 (CLTCRKRRIKCDERKPICYNCIKSKRQC) form a DNA-binding region, zn(2)-C6 fungal-type.

Its subcellular location is the nucleus. This is an uncharacterized protein from Schizosaccharomyces pombe (strain 972 / ATCC 24843) (Fission yeast).